Reading from the N-terminus, the 303-residue chain is MIQQRTLKNTIRATGVGLHSGDKVYMTLRPAPVNHGIVFRRVDLDPVVEVPAKAELVTEVTLCTGLTCNDAKIQTVEHLMSALAGLGVDNIIVELSSAELPIMDGSAGPFVFLLQSAGIVEQDAPKRFIRVLKTVEVTEGDKVARFSPYEGYKLGFTIQFDHPMIPAKQSRQEIEFSTLAYTKEISRARTFGFMRDLEYMRERNLGLGGSMDNAIVLDEFRVLNEDGLRYADEFVRHKILDAIGDLYLAGGQVLGAYEGFKSGHALNNKLVRALMADATAWEWVSFDSPATPDPVEYATPAYA.

Residues histidine 78, histidine 237, and aspartate 241 each contribute to the Zn(2+) site. Histidine 264 functions as the Proton donor in the catalytic mechanism.

This sequence belongs to the LpxC family. The cofactor is Zn(2+).

The enzyme catalyses a UDP-3-O-[(3R)-3-hydroxyacyl]-N-acetyl-alpha-D-glucosamine + H2O = a UDP-3-O-[(3R)-3-hydroxyacyl]-alpha-D-glucosamine + acetate. The protein operates within glycolipid biosynthesis; lipid IV(A) biosynthesis; lipid IV(A) from (3R)-3-hydroxytetradecanoyl-[acyl-carrier-protein] and UDP-N-acetyl-alpha-D-glucosamine: step 2/6. Its function is as follows. Catalyzes the hydrolysis of UDP-3-O-myristoyl-N-acetylglucosamine to form UDP-3-O-myristoylglucosamine and acetate, the committed step in lipid A biosynthesis. This is UDP-3-O-acyl-N-acetylglucosamine deacetylase from Stenotrophomonas maltophilia (strain K279a).